The chain runs to 275 residues: Erythroagglutinating phytohemagglutinin (275 aa).

The N-terminal stretch at Met-1–Ser-21 is a signal peptide. Asn-33 carries N-linked (GlcNAc...) (high mannose) asparagine glycosylation. Asn-81 and Asn-101 each carry an N-linked (GlcNAc...) asparagine glycan.

Belongs to the leguminous lectin family.

This insecticidal carbohydrate-binding lectin is toxic for the cowpea weevil. The sequence is that of Erythroagglutinating phytohemagglutinin (DLEC1) from Phaseolus vulgaris (Kidney bean).